Consider the following 325-residue polypeptide: Formimidoylglutamase (325 aa).

Mn(2+) contacts are provided by His130, Asp156, His158, Asp160, Cys244, and Asp246.

This sequence belongs to the arginase family. Mn(2+) serves as cofactor.

It carries out the reaction N-formimidoyl-L-glutamate + H2O = formamide + L-glutamate. The protein operates within amino-acid degradation; L-histidine degradation into L-glutamate; L-glutamate from N-formimidoyl-L-glutamate (hydrolase route): step 1/1. Its function is as follows. Catalyzes the conversion of N-formimidoyl-L-glutamate to L-glutamate and formamide. This is Formimidoylglutamase from Geobacillus sp. (strain WCH70).